Here is a 156-residue protein sequence, read N- to C-terminus: Large ribosomal subunit protein uL15 (156 aa).

The segment at 25–48 (RGIGCGKGKTSGRGHKGQKARSGV) is disordered. Residues 34–43 (TSGRGHKGQK) show a composition bias toward basic residues.

Belongs to the universal ribosomal protein uL15 family. As to quaternary structure, part of the 50S ribosomal subunit.

Functionally, binds to the 23S rRNA. This Wolbachia pipientis subsp. Culex pipiens (strain wPip) protein is Large ribosomal subunit protein uL15.